We begin with the raw amino-acid sequence, 213 residues long: FMN-dependent NADH:quinone oxidoreductase (213 aa).

Position 17–19 (17–19) interacts with FMN; that stretch reads SSS.

The protein belongs to the azoreductase type 1 family. In terms of assembly, homodimer. FMN is required as a cofactor.

It catalyses the reaction 2 a quinone + NADH + H(+) = 2 a 1,4-benzosemiquinone + NAD(+). The enzyme catalyses N,N-dimethyl-1,4-phenylenediamine + anthranilate + 2 NAD(+) = 2-(4-dimethylaminophenyl)diazenylbenzoate + 2 NADH + 2 H(+). In terms of biological role, quinone reductase that provides resistance to thiol-specific stress caused by electrophilic quinones. Its function is as follows. Also exhibits azoreductase activity. Catalyzes the reductive cleavage of the azo bond in aromatic azo compounds to the corresponding amines. The protein is FMN-dependent NADH:quinone oxidoreductase of Ruminiclostridium cellulolyticum (strain ATCC 35319 / DSM 5812 / JCM 6584 / H10) (Clostridium cellulolyticum).